The sequence spans 103 residues: GP16 protein (103 aa).

The polypeptide is GP16 protein (GP16) (Orgyia pseudotsugata multicapsid polyhedrosis virus (OpMNPV)).